The chain runs to 215 residues: MRLIILGAPGAGKGTQAEYLSSRFGIPHISTGDILRENVKNQTELGKKAKEYMDKGLLVPDEIVIEIVKNRLMQDDCKNGFLLDGFPRTIAQAEALEKVLADLGQKIDKVLNIEVPDEKILERMSGRRICKSCGASFHVVYRPPKKEGICDICGGQLYQREDDKEETVKKRLEVYHAQTQPLIEYYKNKGLLVTAVGQEEIADTTKEVLKALGVE.

Residue 10-15 (GAGKGT) participates in ATP binding. Residues 30-59 (STGDILRENVKNQTELGKKAKEYMDKGLLV) are NMP. AMP contacts are provided by residues Thr31, Arg36, 57-59 (LLV), 85-88 (GFPR), and Gln92. The tract at residues 126 to 163 (GRRICKSCGASFHVVYRPPKKEGICDICGGQLYQREDD) is LID. Residue Arg127 coordinates ATP. Zn(2+) contacts are provided by Cys130 and Cys133. Residue 136 to 137 (SF) participates in ATP binding. The Zn(2+) site is built by Cys150 and Cys153. Residues Arg160 and Arg171 each contribute to the AMP site. Glu199 contacts ATP.

Belongs to the adenylate kinase family. In terms of assembly, monomer.

It localises to the cytoplasm. It carries out the reaction AMP + ATP = 2 ADP. It functions in the pathway purine metabolism; AMP biosynthesis via salvage pathway; AMP from ADP: step 1/1. Functionally, catalyzes the reversible transfer of the terminal phosphate group between ATP and AMP. Plays an important role in cellular energy homeostasis and in adenine nucleotide metabolism. In Caldicellulosiruptor saccharolyticus (strain ATCC 43494 / DSM 8903 / Tp8T 6331), this protein is Adenylate kinase.